Reading from the N-terminus, the 306-residue chain is Palmitoyl-protein thioesterase 1 (306 aa).

A signal peptide spans 1-27 (MASSCSRRLLAAALLPWCCAAWALGHL). Cystine bridges form between Cys45–Cys46, Cys96–Cys128, and Cys152–Cys160. The active site involves Ser115. N-linked (GlcNAc...) asparagine glycosylation is found at Asn197, Asn212, and Asn232. Catalysis depends on residues Asp233 and His289.

This sequence belongs to the palmitoyl-protein thioesterase family. As to quaternary structure, interacts with CLN5, ATP5F1A and ATP5F1B. Post-translationally, glycosylated. Highest level in testis and kidney, lower in heart, brain and lung and lowest in skeletal muscle.

It is found in the lysosome. It localises to the secreted. The protein resides in the golgi apparatus. The protein localises to the endoplasmic reticulum. The catalysed reaction is S-hexadecanoyl-L-cysteinyl-[protein] + H2O = L-cysteinyl-[protein] + hexadecanoate + H(+). It carries out the reaction hexadecanoyl-CoA + H2O = hexadecanoate + CoA + H(+). It catalyses the reaction S-hexadecanoyl-N-acetylcysteamine + H2O = N-acetylcysteamine + hexadecanoate + H(+). The enzyme catalyses S-hexadecanoyl-N-acetylcysteine methyl ester + H2O = N-acetylcysteine methyl ester + hexadecanoate + H(+). Has thioesterase activity against fatty acid thioesters with 14 -18 carbons, including palmitoyl-CoA, S-palmitoyl-N-acetylcysteamine, and palmitoylated proteins. In contrast to PPT2, PPT1 can hydrolyze palmitoylated proteins and palmitoylcysteine. The chain is Palmitoyl-protein thioesterase 1 (Ppt1) from Mus musculus (Mouse).